We begin with the raw amino-acid sequence, 536 residues long: uncharacterized protein (536 aa).

The Cytoplasmic portion of the chain corresponds to 1–8 (MVSIKRYE). Residues 9–29 (IISFVIAAFFFLSGLSMWIAF) form a helical membrane-spanning segment. Residues 30–502 (WPIFNSELRS…VWLGVIIVPR (473 aa)) lie on the Extracellular side of the membrane. Residues N73, N236, N363, and N376 are each glycosylated (N-linked (GlcNAc...) asparagine). The chain crosses the membrane as a helical span at residues 503-523 (IIEYLKFVLIFISICILTTLL). At 524–536 (VIRVRVKGTVSVV) the chain is on the cytoplasmic side.

This sequence belongs to the CD36 family.

Its subcellular location is the membrane. This is an uncharacterized protein from Caenorhabditis elegans.